Here is a 74-residue protein sequence, read N- to C-terminus: NADH dehydrogenase [ubiquinone] 1 alpha subcomplex assembly factor 8 (74 aa).

The region spanning 22–69 (LAACGAEAAAYGRCVQASTAPGGRLSKDFCAREFEALRSCFAAAAKKT) is the CHCH domain. Short sequence motifs (cx9C motif) lie at residues 25–35 (CGAEAAAYGRC) and 51–61 (CAREFEALRSC). Intrachain disulfides connect C25/C61 and C35/C51.

In terms of assembly, interacts with NDUFAF5.

The protein localises to the mitochondrion. Involved in the assembly of mitochondrial NADH:ubiquinone oxidoreductase complex (complex I, MT-ND1). Required to stabilize NDUFAF5. This chain is NADH dehydrogenase [ubiquinone] 1 alpha subcomplex assembly factor 8, found in Homo sapiens (Human).